The sequence spans 133 residues: Ribosome-binding factor A (133 aa).

Belongs to the RbfA family. Monomer. Binds 30S ribosomal subunits, but not 50S ribosomal subunits or 70S ribosomes.

It localises to the cytoplasm. Its function is as follows. One of several proteins that assist in the late maturation steps of the functional core of the 30S ribosomal subunit. Associates with free 30S ribosomal subunits (but not with 30S subunits that are part of 70S ribosomes or polysomes). Required for efficient processing of 16S rRNA. May interact with the 5'-terminal helix region of 16S rRNA. In Proteus mirabilis (strain HI4320), this protein is Ribosome-binding factor A.